Here is a 504-residue protein sequence, read N- to C-terminus: Maturase K (504 aa).

The protein belongs to the intron maturase 2 family. MatK subfamily.

The protein resides in the plastid. It is found in the chloroplast. Its function is as follows. Usually encoded in the trnK tRNA gene intron. Probably assists in splicing its own and other chloroplast group II introns. This Erythrina crista-galli (Cockspur coral tree) protein is Maturase K.